The following is a 210-amino-acid chain: Large ribosomal subunit protein uL3 (210 aa).

Residues 131–165 (GPMSHGSKYHRRVGSMGATTDPGRTFKGKKMPGRM) form a disordered region.

Belongs to the universal ribosomal protein uL3 family. Part of the 50S ribosomal subunit. Forms a cluster with proteins L14 and L19.

One of the primary rRNA binding proteins, it binds directly near the 3'-end of the 23S rRNA, where it nucleates assembly of the 50S subunit. The chain is Large ribosomal subunit protein uL3 from Caldanaerobacter subterraneus subsp. tengcongensis (strain DSM 15242 / JCM 11007 / NBRC 100824 / MB4) (Thermoanaerobacter tengcongensis).